The sequence spans 746 residues: NAD(P)H-quinone oxidoreductase subunit 5, chloroplastic (746 aa).

A run of 16 helical transmembrane segments spans residues 9–29 (WIIPFIPLPVPILLGVGLLLF), 40–60 (WTFLSIFLLSIVMIFSLYLSI), 89–109 (IDPLTSIMLILITTVGILVLI), 125–145 (FAYMGFFNTSMLGLVTSSNLI), 147–167 (VYFFWELVGMCSYLLIGFWFT), 185–205 (GDFGLLLGILGLYWITGSFEF), 221–241 (VNLLFFTLCAFLLFVGPIAKS), 258–278 (TPISALIHAATMVAAGIFLVA), 280–300 (LLPIFIVIPSIMYIISLIGII), 327–347 (LGYMMLALGMGSYRAALFHLI), 354–374 (ALLFLGSGSIIHSMEAIVGYS), 396–416 (TAFLVGTLSLCGIPPLACFWS), 425–445 (FLFSPIFAIIACSTAGLTAFY), 547–567 (ILFPMLLLLLFTLFVGAIGIP), 608–628 (FSVSIALFGIFIAYCLYKPFY), and 723–743 (YLFLYLSYVLIFLTILFFFYF).

Belongs to the complex I subunit 5 family. NDH is composed of at least 16 different subunits, 5 of which are encoded in the nucleus.

It localises to the plastid. Its subcellular location is the chloroplast thylakoid membrane. The catalysed reaction is a plastoquinone + NADH + (n+1) H(+)(in) = a plastoquinol + NAD(+) + n H(+)(out). It catalyses the reaction a plastoquinone + NADPH + (n+1) H(+)(in) = a plastoquinol + NADP(+) + n H(+)(out). Functionally, NDH shuttles electrons from NAD(P)H:plastoquinone, via FMN and iron-sulfur (Fe-S) centers, to quinones in the photosynthetic chain and possibly in a chloroplast respiratory chain. The immediate electron acceptor for the enzyme in this species is believed to be plastoquinone. Couples the redox reaction to proton translocation, and thus conserves the redox energy in a proton gradient. The sequence is that of NAD(P)H-quinone oxidoreductase subunit 5, chloroplastic (ndhF) from Lobularia maritima (Sweet alyssum).